The following is a 135-amino-acid chain: Large ribosomal subunit protein uL16m (135 aa).

It belongs to the universal ribosomal protein uL16 family.

It is found in the mitochondrion. The chain is Large ribosomal subunit protein uL16m (RPL16) from Prototheca wickerhamii.